Reading from the N-terminus, the 222-residue chain is MVLRSEILVNKNVLPTAEQALPGRETPMALPEFHYVFEGTPLLGPFFEGDIDFAIFALGCFWGAERRFWQREGVVSTVVGYAGGFTPNPTYEEVCSGLTGHTEVVLVVFDKNKVSYHDLLTMFWELHNPTQGMRQGNDVGTQYRSAIYCTSPQQLEEAKTSRDAFQAELSKAGFGEITTEIAQAPTVYFAEAYHQQYLAKNPDGYCGIGGTGVCLPPSLQGN.

Cysteine 60 is an active-site residue.

Belongs to the MsrA Met sulfoxide reductase family.

It carries out the reaction L-methionyl-[protein] + [thioredoxin]-disulfide + H2O = L-methionyl-(S)-S-oxide-[protein] + [thioredoxin]-dithiol. The enzyme catalyses [thioredoxin]-disulfide + L-methionine + H2O = L-methionine (S)-S-oxide + [thioredoxin]-dithiol. In terms of biological role, has an important function as a repair enzyme for proteins that have been inactivated by oxidation. Catalyzes the reversible oxidation-reduction of methionine sulfoxide in proteins to methionine. This is Peptide methionine sulfoxide reductase MsrA from Pseudomonas entomophila (strain L48).